Reading from the N-terminus, the 874-residue chain is Alanine--tRNA ligase (874 aa).

Zn(2+) contacts are provided by H562, H566, C664, and H668.

It belongs to the class-II aminoacyl-tRNA synthetase family. Requires Zn(2+) as cofactor.

The protein localises to the cytoplasm. It catalyses the reaction tRNA(Ala) + L-alanine + ATP = L-alanyl-tRNA(Ala) + AMP + diphosphate. In terms of biological role, catalyzes the attachment of alanine to tRNA(Ala) in a two-step reaction: alanine is first activated by ATP to form Ala-AMP and then transferred to the acceptor end of tRNA(Ala). Also edits incorrectly charged Ser-tRNA(Ala) and Gly-tRNA(Ala) via its editing domain. This chain is Alanine--tRNA ligase, found in Neisseria meningitidis serogroup B (strain ATCC BAA-335 / MC58).